Consider the following 124-residue polypeptide: Large ribosomal subunit protein bL20c (124 aa).

This sequence belongs to the bacterial ribosomal protein bL20 family.

It is found in the plastid. The protein localises to the chloroplast. Binds directly to 23S ribosomal RNA and is necessary for the in vitro assembly process of the 50S ribosomal subunit. It is not involved in the protein synthesizing functions of that subunit. In Euglena gracilis, this protein is Large ribosomal subunit protein bL20c (rpl20).